We begin with the raw amino-acid sequence, 169 residues long: Ribosome maturation factor RimM (169 aa).

The PRC barrel domain maps to 93 to 166 (GEHEFYYHEI…RIQITPLPGL (74 aa)).

This sequence belongs to the RimM family. In terms of assembly, binds ribosomal protein uS19.

Its subcellular location is the cytoplasm. Its function is as follows. An accessory protein needed during the final step in the assembly of 30S ribosomal subunit, possibly for assembly of the head region. Essential for efficient processing of 16S rRNA. May be needed both before and after RbfA during the maturation of 16S rRNA. It has affinity for free ribosomal 30S subunits but not for 70S ribosomes. The protein is Ribosome maturation factor RimM of Exiguobacterium sibiricum (strain DSM 17290 / CCUG 55495 / CIP 109462 / JCM 13490 / 255-15).